A 172-amino-acid chain; its full sequence is Lectin (172 aa).

The N-terminal stretch at 1-20 (MVWCLADLRAYVLVLLVISG) is a signal peptide. Positions 36-172 (DCTPGWDCHF…ICKYTTPCRY (137 aa)) constitute a C-type lectin domain. Cystine bridges form between cysteine 65–cysteine 164 and cysteine 140–cysteine 156. A glycan (N-linked (GlcNAc...) asparagine) is linked at asparagine 93.

As to quaternary structure, heterodimer. As to expression, anterior part of oviduct.

It localises to the secreted. Functionally, may be involved in protection of eggs and embryos against microorganisms. Calcium-dependent lectin with specificity to D-glucose and D-glucosamine. Can agglutinate microorganisms in vivo. In Pleurodeles waltl (Iberian ribbed newt), this protein is Lectin (LEC).